The sequence spans 181 residues: Putative NAD(P)H-dependent FMN-containing oxidoreductase YwqN (181 aa).

The protein belongs to the SsuE family. It depends on FMN as a cofactor.

Functionally, putative NADPH-dependent oxidoreductase. The polypeptide is Putative NAD(P)H-dependent FMN-containing oxidoreductase YwqN (ywqN) (Bacillus subtilis (strain 168)).